Reading from the N-terminus, the 347-residue chain is MKQTIILLYGGRSAEREVSVLSAESVMRAVNYDRFTVKTFFISQSGDFIKTQEFSHAPGQEDRLMTNETIDWDKKVAPSAIYEEGAVVFPVLHGPMGEDGSVQGFLEVLKMPYVGCNILSSSLAMDKITTKRVLESAGIAQVPYVAIVEGDDVTAKIAEVEEKLAYPVFTKPSNMGSSVGISKSENQEELRPALELAFRYDSRVLVEQGVNAREIEVGLLGNYDVKSTLPGEVVKDVAFYDYDAKYIDNKITMDIPAKISDDVVAVMRQNAETAFRAIGGLGLSRCDFFYTDKGEIFLNELNTMPGFTQWSMYPLLWDNMGISYPELIERLVDLAKESFDKREAHLI.

The 203-residue stretch at 131–333 folds into the ATP-grasp domain; the sequence is KRVLESAGIA…YPELIERLVD (203 aa). 161–216 lines the ATP pocket; sequence EEKLAYPVFTKPSNMGSSVGISKSENQEELRPALELAFRYDSRVLVEQGVNAREIE. Mg(2+) is bound by residues Asp-287, Glu-300, and Asn-302.

This sequence belongs to the D-alanine--D-alanine ligase family. Requires Mg(2+) as cofactor. It depends on Mn(2+) as a cofactor.

The protein resides in the cytoplasm. The catalysed reaction is 2 D-alanine + ATP = D-alanyl-D-alanine + ADP + phosphate + H(+). It participates in cell wall biogenesis; peptidoglycan biosynthesis. In terms of biological role, cell wall formation. The polypeptide is D-alanine--D-alanine ligase (Streptococcus pneumoniae (strain Taiwan19F-14)).